The primary structure comprises 111 residues: Cell division protein FtsB (111 aa).

Topologically, residues 1–3 (MGK) are cytoplasmic. Residues 4–21 (LTLLLLILLGWLQYSLWL) form a helical membrane-spanning segment. Topologically, residues 22–111 (GKNGIHDYVR…TNTSSNNTQR (90 aa)) are periplasmic. Positions 33-63 (KDDVVVQQGNNAKLKDRNEQLFAEIDDLNGG) form a coiled coil. Residues 88–111 (VPESNHRNANTPSSTNTSSNNTQR) are disordered. Positions 97–111 (NTPSSTNTSSNNTQR) are enriched in low complexity.

It belongs to the FtsB family. Part of a complex composed of FtsB, FtsL and FtsQ.

The protein localises to the cell inner membrane. Essential cell division protein. May link together the upstream cell division proteins, which are predominantly cytoplasmic, with the downstream cell division proteins, which are predominantly periplasmic. The sequence is that of Cell division protein FtsB from Pectobacterium atrosepticum (strain SCRI 1043 / ATCC BAA-672) (Erwinia carotovora subsp. atroseptica).